The chain runs to 426 residues: Glutamate-1-semialdehyde 2,1-aminomutase (426 aa).

Lysine 265 is subject to N6-(pyridoxal phosphate)lysine.

The protein belongs to the class-III pyridoxal-phosphate-dependent aminotransferase family. HemL subfamily. As to quaternary structure, homodimer. Pyridoxal 5'-phosphate is required as a cofactor.

Its subcellular location is the cytoplasm. It carries out the reaction (S)-4-amino-5-oxopentanoate = 5-aminolevulinate. It participates in porphyrin-containing compound metabolism; protoporphyrin-IX biosynthesis; 5-aminolevulinate from L-glutamyl-tRNA(Glu): step 2/2. The chain is Glutamate-1-semialdehyde 2,1-aminomutase from Escherichia coli O7:K1 (strain IAI39 / ExPEC).